The primary structure comprises 589 residues: Splicing factor U2af large subunit B (589 aa).

A disordered region spans residues 1–195; it reads MMSYEGNGDG…KRRSGFDMAP (195 aa). Residues 14–27 are compositionally biased toward polar residues; it reads STENHNENYISLES. Basic and acidic residues-rich tracts occupy residues 29-100 and 109-145; these read PFHE…DRQR and RDRS…DREV. Composition is skewed to basic residues over residues 146-156 and 164-188; these read RHRRRSRSRSR and RSEH…SKRR. 3 consecutive RRM domains span residues 255-338, 375-453, and 494-580; these read RRVY…RPTD, DRIF…RAIQ, and QVVT…YPED.

The protein belongs to the splicing factor SR family. In terms of assembly, component of the spliceosome. Interacts with SF1 in the nucleus.

It is found in the nucleus. It localises to the nucleus speckle. Functionally, necessary for the splicing of pre-mRNA. The polypeptide is Splicing factor U2af large subunit B (Arabidopsis thaliana (Mouse-ear cress)).